The chain runs to 220 residues: uncharacterized protein (220 aa).

This is an uncharacterized protein from Sinorhizobium fredii (strain NBRC 101917 / NGR234).